The following is a 530-amino-acid chain: Chaperone Ric-8A (530 aa).

Serine 435 bears the Phosphoserine; by CK2 mark. Threonine 440 is modified (phosphothreonine; by CK2). A Phosphothreonine modification is found at threonine 442. Phosphoserine is present on residues serine 501, serine 522, serine 523, and serine 527.

It belongs to the synembryn family. Interacts with GDP-bound G alpha proteins GNAI1, GNAO1 and GNAQ, and with GNA13 with lower affinity. Does not interact with G-alpha proteins when they are in complex with subunits beta and gamma. Interacts (via C-terminus) with RGS14; the interaction stimulates the dissociation of the complex between RGS14 and the active GTP-bound form of GNAI1. Interacts with NCS1; interaction is favored in the absence of Ca(2+) and myristoylation of NCS1 is not required. Post-translationally, phosphorylated at Ser-435 and Thr-440 by CK2, stabilizing its interface with G alpha proteins.

Its subcellular location is the cytoplasm. It is found in the cell cortex. Its function is as follows. Chaperone that specifically binds and folds nascent G alpha proteins prior to G protein heterotrimer formation, promoting their stability and activity: folds GNAI1, GNAO1, GNA13 and GNAQ. Does not fold G(s) G-alpha proteins GNAS nor GNAL. Also acts as a guanine nucleotide exchange factor (GEF) for G alpha proteins by stimulating exchange of bound GDP for free GTP. Involved in regulation of microtubule pulling forces during mitotic movement of chromosomes by stimulating G(i)-alpha protein (GNAI1), possibly leading to release G(i)-alpha-GTP and NuMA proteins from the NuMA-GPSM2-G(i)-alpha-GDP complex. Also acts as an activator for G(q)-alpha (GNAQ) protein by enhancing the G(q)-coupled receptor-mediated ERK activation. In Rattus norvegicus (Rat), this protein is Chaperone Ric-8A.